The sequence spans 314 residues: Fibrinogen-like protein 1 (314 aa).

A signal peptide spans 1–22 (MGKIYSFVLVAIALMMGREGWA). Residues 28–62 (CLREQVRLRAQVHQLETRVKQQQTMIAQLLHEKEV) are a coiled coil. The Fibrinogen C-terminal domain maps to 76 to 308 (LGGKRQYADC…SVVMKIRPSD (233 aa)). Cystine bridges form between C85–C114 and C250–C263.

Homodimer. Interacts (via the Fibrinogen C-terminal domain) with LAG3 (via Ig-like domains 1 and 2). As to expression, mainly expressed in liver. Also expressed in brown adipose tissue.

The protein localises to the secreted. Functionally, immune suppressive molecule that inhibits antigen-specific T-cell activation by acting as a major ligand of LAG3. Responsible for LAG3 T-cell inhibitory function. Binds LAG3 independently from MHC class II (MHC-II). Secreted by, and promotes growth of, hepatocytes. This Mus musculus (Mouse) protein is Fibrinogen-like protein 1 (Fgl1).